A 571-amino-acid polypeptide reads, in one-letter code: Hemagglutinin-neuraminidase (571 aa).

Over 1–26 (MDRAVNRVVLENEEREAKNTWRLVFR) the chain is Intravirion. A helical transmembrane segment spans residues 27-47 (IAVLLLMVMTLAISAAALVYS). The Virion surface portion of the chain corresponds to 48-571 (MGASTPRDLA…LVEILKDDRV (524 aa)). Asparagine 119 carries an N-linked (GlcNAc...) asparagine; by host glycan. Residues 124–152 (GEPVHDPDYIGGIGKELIVDDISDVTSFY) form an important for interaction with fusion/F protein region. 3 disulfide bridges follow: cysteine 172–cysteine 196, cysteine 186–cysteine 247, and cysteine 238–cysteine 251. The involved in neuraminidase activity stretch occupies residues 234–239 (NRKSCS). N-linked (GlcNAc...) asparagine; by host glycosylation is found at asparagine 341 and asparagine 433. 2 disulfides stabilise this stretch: cysteine 344/cysteine 461 and cysteine 455/cysteine 465. N-linked (GlcNAc...) asparagine; by host glycans are attached at residues asparagine 481, asparagine 508, and asparagine 538. Cysteine 531 and cysteine 542 are oxidised to a cystine.

This sequence belongs to the paramyxoviruses hemagglutinin-neuraminidase family. As to quaternary structure, homotetramer; composed of disulfide-linked homodimers. Interacts with F protein trimer. Interacts with host CG-1B; this interaction inhibits viral adsorption and replication rather than internalization.

The protein resides in the virion membrane. The protein localises to the host cell membrane. It catalyses the reaction Hydrolysis of alpha-(2-&gt;3)-, alpha-(2-&gt;6)-, alpha-(2-&gt;8)- glycosidic linkages of terminal sialic acid residues in oligosaccharides, glycoproteins, glycolipids, colominic acid and synthetic substrates.. In terms of biological role, mediates the viral entry into the host cell together with fusion/F protein. Attaches the virus to sialic acid-containing cell receptors and thereby initiates infection. Binding of HN protein to the receptor induces a conformational change that allows the F protein to trigger virion/cell membranes fusion. Its function is as follows. Neuraminidase activity ensures the efficient spread of the virus by dissociating the mature virions from the neuraminic acid containing glycoproteins. This chain is Hemagglutinin-neuraminidase (HN), found in Gallus gallus (Chicken).